The sequence spans 714 residues: Fimbrin-3 (714 aa).

The EF-hand domain maps to 7–55 (VIVSDPWLQSQLTQVELRSLNSKFVALKNQSGKVTLEDLPSVLVKVKSL). 4 Calponin-homology (CH) domains span residues 124–241 (QSEK…KIQL), 269–372 (LPPE…HERN), 393–499 (CRDE…RTHM), and 514–622 (DMTD…YWSL). 2 actin-binding regions span residues 124 to 372 (QSEK…HERN) and 393 to 622 (CRDE…YWSL). A compositionally biased stretch (low complexity) spans 628–662 (SSESSSSSSDSSSTHSTTTTCTSTCTSTDASPAPS). The interval 628–694 (SSESSSSSSD…NEVSSLTIEE (67 aa)) is disordered. Residues 670–680 (SSLNGEVSSLT) are compositionally biased toward polar residues. A compositionally biased stretch (acidic residues) spans 681–694 (IEEDNEVSSLTIEE).

In terms of assembly, interacts with F-actin.

It is found in the cytoplasm. The protein resides in the cytoskeleton. In terms of biological role, cross-links actin filaments (F-actin). Stabilizes and prevents F-actin depolymerization mediated by profilin. May regulate actin cytoarchitecture, cell cycle, cell division, cell elongation and cytoplasmic tractus. In Arabidopsis thaliana (Mouse-ear cress), this protein is Fimbrin-3.